Consider the following 531-residue polypeptide: 2,3-bisphosphoglycerate-independent phosphoglycerate mutase (531 aa).

2 residues coordinate Mn(2+): Asp13 and Ser63. The active-site Phosphoserine intermediate is Ser63. Substrate is bound by residues His124, 154 to 155 (RD), Arg187, Arg193, 261 to 264 (RPDR), and Lys342. Residues Asp420, His424, Asp462, His463, and His480 each coordinate Mn(2+).

This sequence belongs to the BPG-independent phosphoglycerate mutase family. Monomer. Mn(2+) is required as a cofactor.

It catalyses the reaction (2R)-2-phosphoglycerate = (2R)-3-phosphoglycerate. It participates in carbohydrate degradation; glycolysis; pyruvate from D-glyceraldehyde 3-phosphate: step 3/5. Functionally, catalyzes the interconversion of 2-phosphoglycerate and 3-phosphoglycerate. The protein is 2,3-bisphosphoglycerate-independent phosphoglycerate mutase of Mycoplasma capricolum subsp. capricolum (strain California kid / ATCC 27343 / NCTC 10154).